A 395-amino-acid chain; its full sequence is Dihydroorotate dehydrogenase (quinone), mitochondrial (395 aa).

A mitochondrion; not cleaved-targeting transit peptide spans 1-10; the sequence is MAWRQLKKRA. Residues 1–10 lie on the Mitochondrial matrix side of the membrane; it reads MAWRQLKKRA. A helical membrane pass occupies residues 11-30; it reads QDAMVILGGGGLLFASYLTA. Topologically, residues 31 to 395 are mitochondrial intermembrane; sequence TGDEHFYAEL…TDAIGADHRR (365 aa). FMN-binding positions include 95 to 99 and Ser-119; that span reads AGFDK. Substrate is bound at residue Lys-99. 144–148 is a substrate binding site; sequence NRYGF. The FMN site is built by Asn-180 and Asn-211. Residue 211–216 coordinates substrate; that stretch reads NVSSPN. Catalysis depends on Ser-214, which acts as the Nucleophile. The FMN site is built by Lys-254 and Thr-282. Residue 283–284 participates in substrate binding; sequence NS. Residues Gly-305, Gly-334, and 355–356 contribute to the FMN site; that span reads YT.

This sequence belongs to the dihydroorotate dehydrogenase family. Type 2 subfamily. In terms of assembly, monomer. FMN serves as cofactor. In terms of processing, the uncleaved transit peptide is required for mitochondrial targeting and proper membrane integration.

The protein resides in the mitochondrion inner membrane. The catalysed reaction is (S)-dihydroorotate + a quinone = orotate + a quinol. The protein operates within pyrimidine metabolism; UMP biosynthesis via de novo pathway; orotate from (S)-dihydroorotate (quinone route): step 1/1. Its function is as follows. Catalyzes the conversion of dihydroorotate to orotate with quinone as electron acceptor. Required for UMP biosynthesis via de novo pathway. The protein is Dihydroorotate dehydrogenase (quinone), mitochondrial (DHODH) of Bos taurus (Bovine).